Consider the following 540-residue polypeptide: CWF19-like protein 1 (540 aa).

The segment at 265–326 (ENPYRKSDKD…AKQPRKHPQP (62 aa)) is disordered. Residues 267–277 (PYRKSDKDTPK) show a composition bias toward basic and acidic residues.

This sequence belongs to the CWF19 family.

The protein is CWF19-like protein 1 (cwf19l1) of Xenopus laevis (African clawed frog).